Reading from the N-terminus, the 88-residue chain is HssA/B-like protein 61 (88 aa).

The protein belongs to the hssA/B family.

This Dictyostelium discoideum (Social amoeba) protein is HssA/B-like protein 61 (hssl61).